Reading from the N-terminus, the 339-residue chain is Probable thylakoid lumen protein sll0997 (339 aa).

Residues 1–26 (MAPYQSFHIGLLGLALASVWPLSACA) form the signal peptide.

The protein localises to the cellular thylakoid lumen. The polypeptide is Probable thylakoid lumen protein sll0997 (Synechocystis sp. (strain ATCC 27184 / PCC 6803 / Kazusa)).